Consider the following 266-residue polypeptide: Undecaprenyl-diphosphatase (266 aa).

The next 8 membrane-spanning stretches (helical) occupy residues 1–21 (MTLF…FLPI), 39–59 (QGLA…MIYF), 87–107 (WYVI…KGWI), 113–133 (TALV…YADA), 143–163 (GLTL…LIPG), 187–207 (FSFL…TLDL), 218–238 (ALLY…YLFL), and 244–264 (IGML…LWFV).

The protein belongs to the UppP family.

It localises to the cell inner membrane. The enzyme catalyses di-trans,octa-cis-undecaprenyl diphosphate + H2O = di-trans,octa-cis-undecaprenyl phosphate + phosphate + H(+). Catalyzes the dephosphorylation of undecaprenyl diphosphate (UPP). Confers resistance to bacitracin. The protein is Undecaprenyl-diphosphatase of Alteromonas mediterranea (strain DSM 17117 / CIP 110805 / LMG 28347 / Deep ecotype).